The following is a 232-amino-acid chain: 5'-methylthioadenosine/S-adenosylhomocysteine nucleosidase (232 aa).

Glu-12 (proton acceptor) is an active-site residue. Residues Gly-78, Ile-152, and 173 to 174 (ME) each bind substrate. Asp-197 serves as the catalytic Proton donor.

Belongs to the PNP/UDP phosphorylase family. MtnN subfamily. In terms of assembly, homodimer.

It carries out the reaction S-adenosyl-L-homocysteine + H2O = S-(5-deoxy-D-ribos-5-yl)-L-homocysteine + adenine. The enzyme catalyses S-methyl-5'-thioadenosine + H2O = 5-(methylsulfanyl)-D-ribose + adenine. It catalyses the reaction 5'-deoxyadenosine + H2O = 5-deoxy-D-ribose + adenine. It functions in the pathway amino-acid biosynthesis; L-methionine biosynthesis via salvage pathway; S-methyl-5-thio-alpha-D-ribose 1-phosphate from S-methyl-5'-thioadenosine (hydrolase route): step 1/2. Functionally, catalyzes the irreversible cleavage of the glycosidic bond in both 5'-methylthioadenosine (MTA) and S-adenosylhomocysteine (SAH/AdoHcy) to adenine and the corresponding thioribose, 5'-methylthioribose and S-ribosylhomocysteine, respectively. Also cleaves 5'-deoxyadenosine, a toxic by-product of radical S-adenosylmethionine (SAM) enzymes, into 5-deoxyribose and adenine. Thus, is required for in vivo function of the radical SAM enzymes biotin synthase and lipoic acid synthase, that are inhibited by 5'-deoxyadenosine accumulation. The protein is 5'-methylthioadenosine/S-adenosylhomocysteine nucleosidase of Edwardsiella ictaluri (strain 93-146).